The sequence spans 395 residues: GPI-anchor transamidase (395 aa).

The N-terminal stretch at 1-27 (MVDTCFLSRGLTTLAGLLLLPFGSLAA) is a signal peptide. Residues 28-368 (SQIEDQAEQF…PKLKDWHPPG (341 aa)) lie on the Lumenal side of the membrane. Ca(2+) contacts are provided by Asp-79, Ile-82, Glu-118, and Asp-120. The active-site Proton donor is His-164. Residue Cys-206 is the Nucleophile; acyl-thioester intermediate of the active site. Residues Cys-206, Ser-232, and Ser-234 each contribute to the a protein site. The interval 231–236 (DSLSHQ) is autoinhibitory loop. A disulfide bridge links Cys-275 with Cys-280. The chain crosses the membrane as a helical span at residues 369–385 (GFILGLWALIIMVFFKT). At 386–395 (YGIKHMKFIF) the chain is on the cytoplasmic side.

Belongs to the peptidase C13 family. As to quaternary structure, heteropentamer. Part of the GPI-anchor transamidase complex, consisting of PIGK, PIGT, PIGS, PIGU and GAA1. Interacts with GPAA1. Interacts with PIGT; this interaction, via a disulfide link, stabilizes the expression of GAA1 and PIGK and links them to PIGS. The disulfide bond between PIGK/GPI8 and PIGT is important for normal enzyme activity.

The protein localises to the endoplasmic reticulum membrane. It functions in the pathway glycolipid biosynthesis; glycosylphosphatidylinositol-anchor biosynthesis. With respect to regulation, in the absence of proproteins substrates, exists in an inactive state with a disrupted catalytic site by an autoinhibitory loop. The binding of proprotein substrates, particularly the CSP region, to GPI-T triggers concerted conformational changes that alleviate the inhibition by the autoinhibitory loop. Meanwhile, proprotein residues near the omega- site induce the formation of a catalytic cleft for catalysis, following which the products are released and GPI-T reverts to the inactive state. Catalytic subunit of the glycosylphosphatidylinositol-anchor (GPI-anchor) transamidase (GPI-T) complex that catalyzes the formation of the linkage between a proprotein and a GPI-anchor and participates in GPI anchored protein biosynthesis. Recognizes diverse proproteins at a C-terminal signal peptide (CSP) region that lacks consensus sequence and replaces it with a GPI-anchor via a transamidation reaction. Transamidation catalysis reaction follows a two-phase mechanism. In the acyl-enzyme phase, the carbonyl group of the proproteins's omega-site undergoes a nucleophilic attack forming an enzyme-substrate thioester bond. Followed by a general acid catalysis that allows CSP releasing, regenerating the carbonyl, and forming the acyl-enzyme intermediate. In the GPI-anchor attachment phase, the amino group of the GPI-anchor's ethanolamine phosphate, the one on third mannose (EtNP3), mediates a nucleophilic attack on the carbonyl of the acyl-enzyme intermediate, replacing the CSP, allowing GPI-anchor attachment to the omega-residue, therefore forming the product and freeing the enzyme. The polypeptide is GPI-anchor transamidase (Bos taurus (Bovine)).